Consider the following 573-residue polypeptide: DNA polymerase lambda (573 aa).

The BRCT domain maps to Asp-35–Leu-131. A disordered region spans residues Thr-126 to Gly-235. A compositionally biased stretch (polar residues) spans Asp-127–Asp-149. The segment at Lys-263–Tyr-277 is DNA-binding. The Schiff-base intermediate with DNA role is filled by Lys-310. The interval Gly-343–Thr-346 is DNA-binding. DCTP-binding positions include Arg-384, Ser-415–Arg-418, and Gly-424–Asp-427. The interval Arg-418 to Asp-427 is involved in primer binding. Mn(2+)-binding residues include Asp-425, Asp-427, and Asp-488. The segment at Glu-464–Tyr-503 is DNA-binding. Position 511 (Asn-511) interacts with dCTP.

It belongs to the DNA polymerase type-X family. As to quaternary structure, interacts with PCNA. Interacts with PAXX; promoting POLL recruitment to double-strand breaks (DSBs) and stimulation of the end-filling activity of POLL. Interacts with XRCC4; promoting POLL recruitment to double-strand breaks (DSBs) and stimulation of the end-filling activity of POLL. Interacts with NHEJ1/XLF; promoting POLL recruitment to double-strand breaks (DSBs) and stimulation of the end-filling activity of POLL. Mn(2+) is required as a cofactor.

Its subcellular location is the nucleus. The catalysed reaction is DNA(n) + a 2'-deoxyribonucleoside 5'-triphosphate = DNA(n+1) + diphosphate. In terms of biological role, DNA polymerase that functions in several pathways of DNA repair. Involved in base excision repair (BER) responsible for repair of lesions that give rise to abasic (AP) sites in DNA. Also contributes to DNA double-strand break repair by non-homologous end joining and homologous recombination. Has both template-dependent and template-independent (terminal transferase) DNA polymerase activities. Also has a 5'-deoxyribose-5-phosphate lyase (dRP lyase) activity. The chain is DNA polymerase lambda from Rattus norvegicus (Rat).